We begin with the raw amino-acid sequence, 450 residues long: Solute carrier family 52, riboflavin transporter, member 2 (450 aa).

5 helical membrane passes run Leu14–Leu34, Leu47–Leu67, Gly86–Ala106, Val112–Phe132, and Phe147–Val167. Asn178 is a glycosylation site (N-linked (GlcNAc...) asparagine). Residues Phe201 to Leu221 form a helical membrane-spanning segment. The span at Thr227 to Leu236 shows a compositional bias: low complexity. The tract at residues Thr227 to Gly264 is disordered. The segment covering Gly242 to Ala252 has biased composition (acidic residues). The next 5 membrane-spanning stretches (helical) occupy residues Ala282–Val302, Leu317–Leu337, Leu344–Leu364, Pro369–Gly389, and Ala409–Phe429.

This sequence belongs to the riboflavin transporter family.

Its subcellular location is the cell membrane. It carries out the reaction riboflavin(in) = riboflavin(out). With respect to regulation, riboflavin transport is Na(+)-independent but moderately pH-sensitive. Activity is strongly inhibited by riboflavin analogs, such as lumiflavin. Weakly inhibited by flavin adenine dinucleotide (FAD) and flavin mononucleotide (FMN). In terms of biological role, plasma membrane transporter mediating the uptake by cells of the water soluble vitamin B2/riboflavin that plays a key role in biochemical oxidation-reduction reactions of the carbohydrate, lipid, and amino acid metabolism. May also act as a receptor for 4-hydroxybutyrate. The sequence is that of Solute carrier family 52, riboflavin transporter, member 2 (Slc52a2) from Mus musculus (Mouse).